The primary structure comprises 182 residues: uncharacterized protein (182 aa).

The region spanning 55 to 182 (VNLHDLEKLC…GVKGMFWYPL (128 aa)) is the N-acetyltransferase domain.

This sequence belongs to the acetyltransferase family. Ycf52 subfamily.

The protein localises to the plastid. It is found in the chloroplast. This is an uncharacterized protein from Gracilaria tenuistipitata var. liui (Red alga).